Reading from the N-terminus, the 309-residue chain is Ribosomal RNA small subunit methyltransferase H (309 aa).

S-adenosyl-L-methionine-binding positions include 36–38 (AGH), D55, F81, D102, and Q109.

The protein belongs to the methyltransferase superfamily. RsmH family.

It localises to the cytoplasm. It catalyses the reaction cytidine(1402) in 16S rRNA + S-adenosyl-L-methionine = N(4)-methylcytidine(1402) in 16S rRNA + S-adenosyl-L-homocysteine + H(+). In terms of biological role, specifically methylates the N4 position of cytidine in position 1402 (C1402) of 16S rRNA. The protein is Ribosomal RNA small subunit methyltransferase H of Mycoplasma genitalium (strain ATCC 33530 / DSM 19775 / NCTC 10195 / G37) (Mycoplasmoides genitalium).